We begin with the raw amino-acid sequence, 211 residues long: MRLGRDMLAPAARLASSRCLGSLARATARKAARSGPDRLLTSRRRFIIDSRRWGRPKTGPNPTDRARPGSKHHIVTDANGTPLAAILTGANVNDVTQLLPLIDAIPPIRGLRGHPLQRPRVVYADRGYDSERHRRALRDRGIEPVIAKRRTEHGSGLGKYRWVVERTHAWLHHFRRLRIRFERRADIHGAFLKLGCCLICWNTLRRADQSL.

The tract at residues 51–71 (RRWGRPKTGPNPTDRARPGSK) is disordered.

Belongs to the transposase 11 family.

In terms of biological role, involved in the transposition of the insertion sequence. This Burkholderia cepacia (Pseudomonas cepacia) protein is Putative transposase for insertion sequence element IS402.